Reading from the N-terminus, the 86-residue chain is Small ribosomal subunit protein uS17 (86 aa).

The protein belongs to the universal ribosomal protein uS17 family. As to quaternary structure, part of the 30S ribosomal subunit.

One of the primary rRNA binding proteins, it binds specifically to the 5'-end of 16S ribosomal RNA. This Methylococcus capsulatus (strain ATCC 33009 / NCIMB 11132 / Bath) protein is Small ribosomal subunit protein uS17.